The sequence spans 307 residues: 3-methyl-2-oxobutanoate hydroxymethyltransferase (307 aa).

The Mg(2+) site is built by Asp-61 and Asp-100. 3-methyl-2-oxobutanoate contacts are provided by residues 61 to 62, Asp-100, and Lys-130; that span reads DS. Glu-132 serves as a coordination point for Mg(2+). Glu-199 serves as the catalytic Proton acceptor.

Belongs to the PanB family. As to quaternary structure, homodecamer; pentamer of dimers. Mg(2+) serves as cofactor.

It localises to the cytoplasm. It catalyses the reaction 3-methyl-2-oxobutanoate + (6R)-5,10-methylene-5,6,7,8-tetrahydrofolate + H2O = 2-dehydropantoate + (6S)-5,6,7,8-tetrahydrofolate. Its pathway is cofactor biosynthesis; (R)-pantothenate biosynthesis; (R)-pantoate from 3-methyl-2-oxobutanoate: step 1/2. Catalyzes the reversible reaction in which hydroxymethyl group from 5,10-methylenetetrahydrofolate is transferred onto alpha-ketoisovalerate to form ketopantoate. This Nitratidesulfovibrio vulgaris (strain ATCC 29579 / DSM 644 / CCUG 34227 / NCIMB 8303 / VKM B-1760 / Hildenborough) (Desulfovibrio vulgaris) protein is 3-methyl-2-oxobutanoate hydroxymethyltransferase.